A 423-amino-acid chain; its full sequence is 3-phosphoshikimate 1-carboxyvinyltransferase (423 aa).

Residues lysine 21, serine 22, and arginine 26 each contribute to the 3-phosphoshikimate site. Lysine 21 contacts phosphoenolpyruvate. Phosphoenolpyruvate-binding residues include glycine 92 and arginine 120. 5 residues coordinate 3-phosphoshikimate: serine 166, glutamine 168, serine 194, aspartate 310, and lysine 337. Glutamine 168 contacts phosphoenolpyruvate. Aspartate 310 functions as the Proton acceptor in the catalytic mechanism. 3 residues coordinate phosphoenolpyruvate: arginine 341, arginine 384, and lysine 409.

This sequence belongs to the EPSP synthase family. Monomer.

It is found in the cytoplasm. The catalysed reaction is 3-phosphoshikimate + phosphoenolpyruvate = 5-O-(1-carboxyvinyl)-3-phosphoshikimate + phosphate. Its pathway is metabolic intermediate biosynthesis; chorismate biosynthesis; chorismate from D-erythrose 4-phosphate and phosphoenolpyruvate: step 6/7. Catalyzes the transfer of the enolpyruvyl moiety of phosphoenolpyruvate (PEP) to the 5-hydroxyl of shikimate-3-phosphate (S3P) to produce enolpyruvyl shikimate-3-phosphate and inorganic phosphate. This chain is 3-phosphoshikimate 1-carboxyvinyltransferase, found in Syntrophobacter fumaroxidans (strain DSM 10017 / MPOB).